The following is a 189-amino-acid chain: Large ribosomal subunit protein uL5c (189 aa).

The protein belongs to the universal ribosomal protein uL5 family. As to quaternary structure, part of the 50S ribosomal subunit; contacts the 5S rRNA.

The protein localises to the plastid. It localises to the chloroplast. Its function is as follows. Binds 5S rRNA, forms part of the central protuberance of the 50S subunit. The protein is Large ribosomal subunit protein uL5c (rpl5) of Chara vulgaris (Common stonewort).